A 232-amino-acid polypeptide reads, in one-letter code: Protein Mis18-alpha (232 aa).

Phosphoserine occurs at positions 36, 39, and 40. Positions 79–177 (PLVFLCSGCR…SVEAIESYVL (99 aa)) constitute a Mis18 domain. Zn(2+) contacts are provided by Cys-84, Cys-87, Cys-140, and Cys-143. Lys-161 participates in a covalent cross-link: Glycyl lysine isopeptide (Lys-Gly) (interchain with G-Cter in SUMO2). Position 232 is a phosphoserine (Ser-232).

Belongs to the mis18 family. In terms of assembly, homodimer, and heterodimer with OIP5/MIS18B. Identified in a complex containing MIS18A, OIP5/MIS18B, MIS18BP1, RBBP7 and RBBP4.

The protein resides in the nucleus. It is found in the chromosome. It localises to the centromere. Required for recruitment of CENPA to centromeres and normal chromosome segregation during mitosis. This chain is Protein Mis18-alpha (MIS18A), found in Pan troglodytes (Chimpanzee).